A 330-amino-acid polypeptide reads, in one-letter code: Elongation factor Ts (330 aa).

The interval 79–82 (TDFV) is involved in Mg(2+) ion dislocation from EF-Tu.

It belongs to the EF-Ts family.

Its subcellular location is the cytoplasm. Associates with the EF-Tu.GDP complex and induces the exchange of GDP to GTP. It remains bound to the aminoacyl-tRNA.EF-Tu.GTP complex up to the GTP hydrolysis stage on the ribosome. The polypeptide is Elongation factor Ts (Bacteroides thetaiotaomicron (strain ATCC 29148 / DSM 2079 / JCM 5827 / CCUG 10774 / NCTC 10582 / VPI-5482 / E50)).